A 377-amino-acid polypeptide reads, in one-letter code: MSGAVPFGAGAVRTGAITGDEAIRARFGLGWPGFRLDVDLALPGRGVIALFGHSGSGKTTLLRCLAGLERAADGYLAVRGELWQDEAQRLFVPTHRRPLGYVFQEASLFAHLTVRRNLEFGLKRVPAASRRIPLDQAIALLGIEPLLDRMSGRLSGGERQRVAIARALATSPRLLLMDEPLAALDVKRKQEILPYLERLHAELDIPVVYVSHAPEEVARLADHVVLLADGRALAAGPIGEVMARLDLPFAHDEDAFVVIDARVAAHDEAYALTRLEFAGLPLWITGLDMPLASRVRARVLARDVSLALTERHDSSILNVLPARVVSLDEADPGRTLVRLDVAGTALLARITRRSAAQLGIVPGRDVYAQVKGVALLR.

In terms of domain architecture, ABC transporter spans 17–254 (ITGDEAIRAR…LDLPFAHDED (238 aa)). 52–59 (GHSGSGKT) is an ATP binding site. The Mop domain occupies 313–377 (DSSILNVLPA…AQVKGVALLR (65 aa)).

It belongs to the ABC transporter superfamily. Molybdate importer (TC 3.A.1.8) family. In terms of assembly, the complex is composed of two ATP-binding proteins (ModC), two transmembrane proteins (ModB) and a solute-binding protein (ModA).

It is found in the cell inner membrane. It carries out the reaction molybdate(out) + ATP + H2O = molybdate(in) + ADP + phosphate + H(+). Its function is as follows. Part of the ABC transporter complex ModABC involved in molybdenum import. Responsible for energy coupling to the transport system. This chain is Molybdenum import ATP-binding protein ModC, found in Aromatoleum aromaticum (strain DSM 19018 / LMG 30748 / EbN1) (Azoarcus sp. (strain EbN1)).